The following is a 314-amino-acid chain: tRNA dimethylallyltransferase (314 aa).

Residue glycine 40–serine 47 participates in ATP binding. Threonine 42 to serine 47 provides a ligand contact to substrate.

The protein belongs to the IPP transferase family. In terms of assembly, monomer. Mg(2+) serves as cofactor.

It catalyses the reaction adenosine(37) in tRNA + dimethylallyl diphosphate = N(6)-dimethylallyladenosine(37) in tRNA + diphosphate. Catalyzes the transfer of a dimethylallyl group onto the adenine at position 37 in tRNAs that read codons beginning with uridine, leading to the formation of N6-(dimethylallyl)adenosine (i(6)A). In Cereibacter sphaeroides (strain KD131 / KCTC 12085) (Rhodobacter sphaeroides), this protein is tRNA dimethylallyltransferase.